The primary structure comprises 741 residues: Prestin (741 aa).

The Cytoplasmic portion of the chain corresponds to 1-79 (MDHVEETEIL…WLPAYRFKEY (79 aa)). A helical transmembrane segment spans residues 80–105 (VLGDIVSGISTGVLQLPQGLAFAMLA). The Extracellular portion of the chain corresponds to 106-109 (AVPP). A helical transmembrane segment spans residues 110-125 (VFGLYSSFYPVIMYCF). Topologically, residues 126–137 (FGTSRHISIGPF) are cytoplasmic. The chain crosses the membrane as a helical span at residues 138–147 (AVISLMIGGV). Residues 148 to 178 (AVRLVPDDIVIPGGVNATNSTEARDALRVKV) lie on the Extracellular side of the membrane. Residues 158-168 (IPGGVNATNST) carry the Involved in motor function motif. Asn163 and Asn166 each carry an N-linked (GlcNAc...) asparagine glycan. 2 helical membrane passes run 179-208 (AMSVTLLTGIIQFCLGVCRFGFVAIYLTEP) and 209-230 (LVRGFTTAAAVHVFTSMLKYLF). At 231–243 (GVKTKRYSGIFSV) the chain is on the extracellular side. Residues 244–248 (VYSTV) constitute an intramembrane region (helical). Residues 249 to 261 (AVLQNVKNLNVCS) are Extracellular-facing. The chain crosses the membrane as a helical span at residues 262 to 283 (LGVGLMVFGLLLGGKEFNERFK). At 284 to 291 (EKLPAPIP) the chain is on the cytoplasmic side. The chain crosses the membrane as a helical span at residues 292–303 (LEFFAVVMGTGI). The Extracellular portion of the chain corresponds to 304–338 (SAGFSLHESYNVDVVGTLPLGLLPPANPDTSLFHL). A helical membrane pass occupies residues 339 to 361 (VYVDAIAIAIVGFSVTISMAKTL). Residues 362–370 (ANKHGYQVD) are Cytoplasmic-facing. Residues 371–388 (GNQELIALGLCNSTGSLF) form a helical membrane-spanning segment. The Extracellular portion of the chain corresponds to 389–396 (QTFAISCS). A helical membrane pass occupies residues 397 to 406 (LSRSLVQEGT). Ser398 is a salicylate binding site. The Cytoplasmic segment spans residues 407–410 (GGKT). Residues 411 to 429 (QLAGCLASLMILLVILATG) form a helical membrane-spanning segment. At 430–436 (FLFESLP) the chain is on the extracellular side. A helical membrane pass occupies residues 437–459 (QAVLSAIVIVNLKGMFMQFSDLP). At 460 to 467 (FFWRTSKI) the chain is on the cytoplasmic side. The helical transmembrane segment at 468–483 (ELTIWLTTFVSSLFLG) threads the bilayer. Leu484 is a topological domain (extracellular). The helical transmembrane segment at 485–498 (DYGLITAVIIALMT) threads the bilayer. At 499 to 741 (VIYRTQSPSY…DSEPNATPEA (243 aa)) the chain is on the cytoplasmic side. The extended region for STAS domain stretch occupies residues 505-718 (SPSYIVLGQL…AVLGSQVREA (214 aa)). Residues 525–713 (AYEEVKEVPG…HSIHDAVLGS (189 aa)) form the STAS domain. The segment at 718 to 741 (ALAEQEATAAPPQEDSEPNATPEA) is disordered. The span at 721–730 (EQEATAAPPQ) shows a compositional bias: low complexity.

It belongs to the SLC26A/SulP transporter (TC 2.A.53) family. In terms of assembly, homodimer. Interacts (via STAS domain) with CALM; this interaction is calcium-dependent and the STAS domain interacts with only one lobe of CALM which is an elongated conformation.

The protein resides in the cell membrane. It catalyses the reaction 2 hydrogencarbonate(in) + chloride(out) = 2 hydrogencarbonate(out) + chloride(in). Functionally, voltage-sensitive motor protein that drives outer hair cell (OHC) electromotility (eM) and participates in sound amplification in the hearing organ. Converts changes in the transmembrane electric potential into mechanical displacements resulting in the coupling of its expansion to movement of a charged voltage sensor across the lipid membrane. The nature of the voltage sensor is not completely clear, and two models compete. In the first model, acts as an incomplete transporter where intracellular chloride anion acts as extrinsic voltage sensor that drives conformational change in the protein which is sufficient to produce a length change in the plane of the membrane and hence in the length of the OHC. The second model in which multiple charged amino acid residues are distributed at the intracellular and extracellular membrane interfaces that form an intrinsic voltage sensor, whose movement produces the non-linear capacitance (NLC). However, the effective voltage sensor may be the result of a hybrid voltage sensor assembled from intrinsic charge (charged residues) and extrinsic charge (bound anion). Notably, binding of anions to the anion-binding pocket partially neutralizes the intrinsic positive charge rather than to form an electrically negative sensor, therefore remaining charge may serve as voltage sensor that, after depolarization, moves from down (expanded state) to up (contracted) conformation, which is accompanied by an eccentric contraction of the intermembrane cross-sectional area of the protein as well as a major increase in the hydrophobic thickness of the protein having as consequences the plasma membrane thickening and the cell contraction after membrane depolarization. The anion-binding pocket transits from the inward-open (Down) state, where it is exposed toward the intracellular solvent in the absence of anion, to the occluded (Up) state upon anion binding. Salicylate competes for the anion-binding site and inhibits the voltage-sensor movement, and therefore inhibits the charge transfer and electromotility by displacing Cl(-) from the anion-binding site and by preventing the structural transitions to the contracted state. In addition, can act as a weak Cl(-)/HCO3 (-) antiporter across the cell membrane and so regulate the intracellular pH of the outer hair cells (OHCs), while firstly found as being unable to mediate electrogenic anion transport. Moreover, supports a role in cardiac mechanical amplification serving as an elastic element to enhance the actomyosin- based sarcomere contraction system. This chain is Prestin, found in Tursiops truncatus (Atlantic bottle-nosed dolphin).